Consider the following 64-residue polypeptide: Large ribosomal subunit protein uL29 (64 aa).

It belongs to the universal ribosomal protein uL29 family.

This chain is Large ribosomal subunit protein uL29, found in Thiobacillus denitrificans (strain ATCC 25259 / T1).